We begin with the raw amino-acid sequence, 153 residues long: Aspartate carbamoyltransferase regulatory chain (153 aa).

Zn(2+)-binding residues include cysteine 109, cysteine 114, cysteine 138, and cysteine 141.

It belongs to the PyrI family. As to quaternary structure, contains catalytic and regulatory chains. Zn(2+) serves as cofactor.

Involved in allosteric regulation of aspartate carbamoyltransferase. This Wigglesworthia glossinidia brevipalpis protein is Aspartate carbamoyltransferase regulatory chain.